The chain runs to 326 residues: ATPase GET3 (326 aa).

32 to 39 (KGGVGKTT) lines the ATP pocket. The active site involves Asp-61. ATP is bound by residues Glu-244 and Asn-271. Zn(2+)-binding residues include Cys-282 and Cys-285.

Belongs to the arsA ATPase family. In terms of assembly, homodimer.

It is found in the cytoplasm. It localises to the endoplasmic reticulum. Functionally, ATPase required for the post-translational delivery of tail-anchored (TA) proteins to the endoplasmic reticulum. Recognizes and selectively binds the transmembrane domain of TA proteins in the cytosol. This complex then targets to the endoplasmic reticulum by membrane-bound receptors, where the tail-anchored protein is released for insertion. This process is regulated by ATP binding and hydrolysis. ATP binding drives the homodimer towards the closed dimer state, facilitating recognition of newly synthesized TA membrane proteins. ATP hydrolysis is required for insertion. Subsequently, the homodimer reverts towards the open dimer state, lowering its affinity for the membrane-bound receptor, and returning it to the cytosol to initiate a new round of targeting. This is ATPase GET3 from Phaeosphaeria nodorum (strain SN15 / ATCC MYA-4574 / FGSC 10173) (Glume blotch fungus).